The primary structure comprises 124 residues: Ribosome-binding factor A (124 aa).

Belongs to the RbfA family. In terms of assembly, monomer. Binds 30S ribosomal subunits, but not 50S ribosomal subunits or 70S ribosomes.

It localises to the cytoplasm. Functionally, one of several proteins that assist in the late maturation steps of the functional core of the 30S ribosomal subunit. Associates with free 30S ribosomal subunits (but not with 30S subunits that are part of 70S ribosomes or polysomes). Required for efficient processing of 16S rRNA. May interact with the 5'-terminal helix region of 16S rRNA. This chain is Ribosome-binding factor A, found in Sorangium cellulosum (strain So ce56) (Polyangium cellulosum (strain So ce56)).